Reading from the N-terminus, the 100-residue chain is MITKEEAQKIAKLARLKFEKDIVEKFSTQLSTIMNMINILNEIDCKDIEPLTSVSNMNARMREDTVTSSDLSNKLFDNVSGNSAKLAKEVKYFITPKVVE.

The protein belongs to the GatC family. In terms of assembly, heterotrimer of A, B and C subunits.

The enzyme catalyses L-glutamyl-tRNA(Gln) + L-glutamine + ATP + H2O = L-glutaminyl-tRNA(Gln) + L-glutamate + ADP + phosphate + H(+). The catalysed reaction is L-aspartyl-tRNA(Asn) + L-glutamine + ATP + H2O = L-asparaginyl-tRNA(Asn) + L-glutamate + ADP + phosphate + 2 H(+). Its function is as follows. Allows the formation of correctly charged Asn-tRNA(Asn) or Gln-tRNA(Gln) through the transamidation of misacylated Asp-tRNA(Asn) or Glu-tRNA(Gln) in organisms which lack either or both of asparaginyl-tRNA or glutaminyl-tRNA synthetases. The reaction takes place in the presence of glutamine and ATP through an activated phospho-Asp-tRNA(Asn) or phospho-Glu-tRNA(Gln). The polypeptide is Glutamyl-tRNA(Gln) amidotransferase subunit C (gatC) (Rickettsia prowazekii (strain Madrid E)).